The following is a 143-amino-acid chain: Transcriptional regulator MraZ (143 aa).

SpoVT-AbrB domains lie at 5–47 (EYQH…PMHE) and 76–119 (ATEC…SKVI).

Belongs to the MraZ family. In terms of assembly, forms oligomers.

It localises to the cytoplasm. The protein localises to the nucleoid. This chain is Transcriptional regulator MraZ, found in Bacillus subtilis (strain 168).